Here is an 85-residue protein sequence, read N- to C-terminus: ATP synthase subunit c (85 aa).

2 helical membrane-spanning segments follow: residues 10-30 and 53-73; these read IAVA…FAVL and FIIA…ALLF.

Belongs to the ATPase C chain family. In terms of assembly, F-type ATPases have 2 components, F(1) - the catalytic core - and F(0) - the membrane proton channel. F(1) has five subunits: alpha(3), beta(3), gamma(1), delta(1), epsilon(1). F(0) has three main subunits: a(1), b(2) and c(10-14). The alpha and beta chains form an alternating ring which encloses part of the gamma chain. F(1) is attached to F(0) by a central stalk formed by the gamma and epsilon chains, while a peripheral stalk is formed by the delta and b chains.

The protein localises to the cell inner membrane. Its function is as follows. F(1)F(0) ATP synthase produces ATP from ADP in the presence of a proton or sodium gradient. F-type ATPases consist of two structural domains, F(1) containing the extramembraneous catalytic core and F(0) containing the membrane proton channel, linked together by a central stalk and a peripheral stalk. During catalysis, ATP synthesis in the catalytic domain of F(1) is coupled via a rotary mechanism of the central stalk subunits to proton translocation. Functionally, key component of the F(0) channel; it plays a direct role in translocation across the membrane. A homomeric c-ring of between 10-14 subunits forms the central stalk rotor element with the F(1) delta and epsilon subunits. The sequence is that of ATP synthase subunit c from Vibrio vulnificus (strain CMCP6).